The primary structure comprises 511 residues: ATP synthase subunit alpha (511 aa).

169–176 (GDRQTGKT) provides a ligand contact to ATP.

This sequence belongs to the ATPase alpha/beta chains family. F-type ATPases have 2 components, CF(1) - the catalytic core - and CF(0) - the membrane proton channel. CF(1) has five subunits: alpha(3), beta(3), gamma(1), delta(1), epsilon(1). CF(0) has three main subunits: a(1), b(2) and c(9-12). The alpha and beta chains form an alternating ring which encloses part of the gamma chain. CF(1) is attached to CF(0) by a central stalk formed by the gamma and epsilon chains, while a peripheral stalk is formed by the delta and b chains.

It is found in the cell inner membrane. It carries out the reaction ATP + H2O + 4 H(+)(in) = ADP + phosphate + 5 H(+)(out). Produces ATP from ADP in the presence of a proton gradient across the membrane. The alpha chain is a regulatory subunit. The chain is ATP synthase subunit alpha from Bartonella henselae (strain ATCC 49882 / DSM 28221 / CCUG 30454 / Houston 1) (Rochalimaea henselae).